Reading from the N-terminus, the 192-residue chain is uncharacterized protein (192 aa).

Transmembrane regions (helical) follow at residues 31–51 and 119–139; these read IVET…YVYE and VPGA…LWEI.

The protein localises to the cell membrane. This is an uncharacterized protein from Thermotoga maritima (strain ATCC 43589 / DSM 3109 / JCM 10099 / NBRC 100826 / MSB8).